The following is a 506-amino-acid chain: NADH-quinone oxidoreductase subunit N 2 (506 aa).

The next 14 membrane-spanning stretches (helical) occupy residues 11–31 (SLAYFAPELVLIAAALLLVVW), 44–64 (LVILSLAALACSGGLGAYFLA), 82–102 (FSNLFRVIFALVTGAIVLFLV), 117–137 (SGELFTLILVLSLGMNLMAAS), 140–160 (LLLIYLSLELVSVISFVLAGF), 175–195 (VIFGGVASGIMLYGMSWIFGI), 222–242 (VFVGTAFMLAGFGYKISAAPF), 254–274 (PTPVTAFLSVGPKAAGFAVLI), 289–309 (GVATPWPVLFGCLAMATMTVG), 323–345 (LAYSSIAHAGYMLLGFSVFSGAG), 356–376 (YCFMNLGAFMVVMAVAEESGG), 394–414 (AAAMAVFLVSLTGLPPTAGFI), 419–439 (LFSALLAAGGAWSWVIAVVGV), and 472–492 (LLGGTACALAIPTVLLGVYWG).

Belongs to the complex I subunit 2 family. NDH-1 is composed of 14 different subunits. Subunits NuoA, H, J, K, L, M, N constitute the membrane sector of the complex.

The protein localises to the cell inner membrane. It carries out the reaction a quinone + NADH + 5 H(+)(in) = a quinol + NAD(+) + 4 H(+)(out). NDH-1 shuttles electrons from NADH, via FMN and iron-sulfur (Fe-S) centers, to quinones in the respiratory chain. The immediate electron acceptor for the enzyme in this species is believed to be ubiquinone. Couples the redox reaction to proton translocation (for every two electrons transferred, four hydrogen ions are translocated across the cytoplasmic membrane), and thus conserves the redox energy in a proton gradient. This chain is NADH-quinone oxidoreductase subunit N 2, found in Sorangium cellulosum (strain So ce56) (Polyangium cellulosum (strain So ce56)).